The sequence spans 127 residues: Longitudinals lacking protein-like (127 aa).

In terms of domain architecture, BTB spans 33-98; sequence TDVTLACEGQ…MYAGEVNVSQ (66 aa).

As to quaternary structure, the BTB domain interacts with the BTB domain of Trl in vitro. Found in a Pc-containing complex.

The protein localises to the nucleus. Its function is as follows. Required, together with Trl, for maintaining the repressed state of target genes including homeotic genes Scr and Ubx. May also be involved in the activation of homeotic genes. Binds to a DNA Polycomb response element (PRE) at the bithorax complex. Also binds to polytene chromosomes at several hundred sites, many of which are shared with Trl and ph-p. Required during embryonic development. The sequence is that of Longitudinals lacking protein-like from Drosophila melanogaster (Fruit fly).